Consider the following 519-residue polypeptide: 2-isopropylmalate synthase (519 aa).

The region spanning 5 to 267 is the Pyruvate carboxyltransferase domain; the sequence is VVIFDTTLRD…STNINYKEIY (263 aa). 4 residues coordinate Mn(2+): Asp14, His202, His204, and Asn238. The regulatory domain stretch occupies residues 392 to 519; it reads SLKFFSVQSI…LKILKDFKKK (128 aa).

Belongs to the alpha-IPM synthase/homocitrate synthase family. LeuA type 1 subfamily. Homodimer. Mn(2+) is required as a cofactor.

It localises to the cytoplasm. The enzyme catalyses 3-methyl-2-oxobutanoate + acetyl-CoA + H2O = (2S)-2-isopropylmalate + CoA + H(+). Its pathway is amino-acid biosynthesis; L-leucine biosynthesis; L-leucine from 3-methyl-2-oxobutanoate: step 1/4. Catalyzes the condensation of the acetyl group of acetyl-CoA with 3-methyl-2-oxobutanoate (2-ketoisovalerate) to form 3-carboxy-3-hydroxy-4-methylpentanoate (2-isopropylmalate). The chain is 2-isopropylmalate synthase from Buchnera aphidicola subsp. Acyrthosiphon pisum (strain APS) (Acyrthosiphon pisum symbiotic bacterium).